A 186-amino-acid chain; its full sequence is Mitoferrin-2B (186 aa).

Residues Ser-75–Thr-163 form a Solcar repeat. The next 3 helical transmembrane spans lie at Val-77–Tyr-96, Arg-137–Tyr-157, and Gly-172–Pro-185.

Belongs to the mitochondrial carrier (TC 2.A.29) family.

The protein localises to the mitochondrion inner membrane. The catalysed reaction is Fe(2+)(in) = Fe(2+)(out). In terms of biological role, mitochondrial iron transporter that mediates iron uptake. Probably required for heme synthesis of hemoproteins and Fe-S cluster assembly in non-erythroid cells. This chain is Mitoferrin-2B (slc25a28-b), found in Xenopus laevis (African clawed frog).